We begin with the raw amino-acid sequence, 118 residues long: MLNHYLPVLIFLLVALVVGVAPLLMGSSLGPHRPDSEKLSPYECGFEAFEDARMKFDVRYYLVAILFILFDLEIAFLFPWAVVFDQIGMTGFLAMMLFLAILVVGFIYEWKKGALEWE.

3 helical membrane-spanning segments follow: residues 6-26 (LPVLIFLLVALVVGVAPLLMG), 64-84 (AILFILFDLEIAFLFPWAVVF), and 87-107 (IGMTGFLAMMLFLAILVVGFI).

The protein belongs to the complex I subunit 3 family. NDH-1 is composed of 14 different subunits. Subunits NuoA, H, J, K, L, M, N constitute the membrane sector of the complex.

The protein localises to the cell inner membrane. The catalysed reaction is a quinone + NADH + 5 H(+)(in) = a quinol + NAD(+) + 4 H(+)(out). NDH-1 shuttles electrons from NADH, via FMN and iron-sulfur (Fe-S) centers, to quinones in the respiratory chain. The immediate electron acceptor for the enzyme in this species is believed to be ubiquinone. Couples the redox reaction to proton translocation (for every two electrons transferred, four hydrogen ions are translocated across the cytoplasmic membrane), and thus conserves the redox energy in a proton gradient. The sequence is that of NADH-quinone oxidoreductase subunit A from Acidithiobacillus ferrooxidans (strain ATCC 53993 / BNL-5-31) (Leptospirillum ferrooxidans (ATCC 53993)).